Reading from the N-terminus, the 123-residue chain is Holo-[acyl-carrier-protein] synthase (123 aa).

Mg(2+) is bound by residues D8 and E60.

It belongs to the P-Pant transferase superfamily. AcpS family. Mg(2+) serves as cofactor.

The protein resides in the cytoplasm. It carries out the reaction apo-[ACP] + CoA = holo-[ACP] + adenosine 3',5'-bisphosphate + H(+). Its function is as follows. Transfers the 4'-phosphopantetheine moiety from coenzyme A to a Ser of acyl-carrier-protein. This chain is Holo-[acyl-carrier-protein] synthase, found in Wolbachia pipientis wMel.